Here is a 71-residue protein sequence, read N- to C-terminus: ATP synthase F(0) complex subunit e, mitochondrial (71 aa).

N6-acetyllysine is present on Lys34. Ser68 is modified (phosphoserine).

Belongs to the ATPase e subunit family. As to quaternary structure, component of the ATP synthase complex composed at least of ATP5F1A/subunit alpha, ATP5F1B/subunit beta, ATP5MC1/subunit c (homooctomer), MT-ATP6/subunit a, MT-ATP8/subunit 8, ATP5ME/subunit e, ATP5MF/subunit f, ATP5MG/subunit g, ATP5MK/subunit k, ATP5MJ/subunit j, ATP5F1C/subunit gamma, ATP5F1D/subunit delta, ATP5F1E/subunit epsilon, ATP5PF/subunit F6, ATP5PB/subunit b, ATP5PD/subunit d, ATP5PO/subunit OSCP. ATP synthase complex consists of a soluble F(1) head domain (subunits alpha(3) and beta(3)) - the catalytic core - and a membrane F(0) domain - the membrane proton channel (subunits c, a, 8, e, f, g, k and j). These two domains are linked by a central stalk (subunits gamma, delta, and epsilon) rotating inside the F1 region and a stationary peripheral stalk (subunits F6, b, d, and OSCP).

The protein localises to the mitochondrion. It localises to the mitochondrion inner membrane. Functionally, subunit e, of the mitochondrial membrane ATP synthase complex (F(1)F(0) ATP synthase or Complex V) that produces ATP from ADP in the presence of a proton gradient across the membrane which is generated by electron transport complexes of the respiratory chain. ATP synthase complex consist of a soluble F(1) head domain - the catalytic core - and a membrane F(1) domain - the membrane proton channel. These two domains are linked by a central stalk rotating inside the F(1) region and a stationary peripheral stalk. During catalysis, ATP synthesis in the catalytic domain of F(1) is coupled via a rotary mechanism of the central stalk subunits to proton translocation. In vivo, can only synthesize ATP although its ATP hydrolase activity can be activated artificially in vitro. Part of the complex F(0) domain. This Sus scrofa (Pig) protein is ATP synthase F(0) complex subunit e, mitochondrial.